Here is a 379-residue protein sequence, read N- to C-terminus: MTTATKPHQGRFRYLTRGSQPTPSKEAYLLPSLSEFGDIVTLPLTDLRPSLDLGQDSPYKLDVHGFTARRHDSALHSAPYSRASWNNEKLLRQIYFPEVEEFVKNVTGCKKAVVSAAVVRNRLYSEGDDSAPAEEEADTQASSSDDTSHMFPPIFGNSVKDGVCPAPKVHLDCTPKGARHHIRRYHSEVALAAEKVIEAENRLLESGVEWNDLKDHSGKVPHFALFSIWRPLKTVHRDPLALSSAASFPVSDYVPCDQREPTDHSIPSHLYRIVGRDDENIDKNDDTYQTQSYLAYAPRDAEKTSHAWHYISEQQPSDVLVIQLFDNEMEGHARAPLEGGKGKSDLGVGGAVHSAFELVDQDEDAEARESIEVRVAAFW.

Disordered stretches follow at residues 1–23 (MTTATKPHQGRFRYLTRGSQPTP) and 126–150 (EGDDSAPAEEEADTQASSSDDTSHM). Positions 126 to 138 (EGDDSAPAEEEAD) are enriched in acidic residues.

The protein belongs to the asaB hydroxylase/desaturase family.

Its pathway is pigment biosynthesis. Functionally, oxidoreductase; part of the gene cluster that mediates the biosynthesis of the yellow pigment chrysogine. Pyruvic acid and anthranilic acid are likely substrates for the nonribosomal peptide synthetase chry1/NRPS14, with pyruvic acid adenylated by the first A domain and anthranilic acid by the second. If pyruvic acid and anthranilic acid are merged and released from chry1/NRPS14 by hydrolysis, a subsequent amidation would lead to 2-pyruvoylaminobenzamide. This process is probably catalyzed by the amidotransferase chry2 using glutamine as amino donor. The dehydrogenase chry5 that has a terminal berberine bridge domain for C-N cyclization could catalyze the cyclization of 2-pyruvoylaminobenzamide to yield acetyl-4(3H)-quinazolidinone. A final reduction of acetyl-4(3H)-quinazolidinone catalyzed by the oxidoreductase chry4 would result in chrysogine. The sequence is that of Oxidoreductase chry3 from Gibberella zeae (strain ATCC MYA-4620 / CBS 123657 / FGSC 9075 / NRRL 31084 / PH-1) (Wheat head blight fungus).